Here is a 468-residue protein sequence, read N- to C-terminus: Lactate utilization protein B (468 aa).

4Fe-4S ferredoxin-type domains are found at residues 303–333 and 352–381; these read GTQF…GHAY and YENY…LHEL. Cysteine 312, cysteine 315, cysteine 318, cysteine 322, cysteine 365, cysteine 368, and cysteine 372 together coordinate [4Fe-4S] cluster. A disordered region spans residues 442-468; sequence PAWTDSKDLPQPNKQTVRDWFKKRGNA. Positions 457–468 are enriched in basic and acidic residues; it reads TVRDWFKKRGNA.

Belongs to the LutB/YkgF family.

Its function is as follows. Is involved in L-lactate degradation and allows cells to grow with lactate as the sole carbon source. Has probably a role as an electron transporter during oxidation of L-lactate. The sequence is that of Lactate utilization protein B from Exiguobacterium sp. (strain ATCC BAA-1283 / AT1b).